An 800-amino-acid chain; its full sequence is Elongation factor G, mitochondrial (800 aa).

A mitochondrion-targeting transit peptide spans 1–34; sequence MSVHTVMRTQVRSLAGMPKAAMRPLGNSFCARRY. The 287-residue stretch at 99-385 folds into the tr-type G domain; it reads SKVRNIGIAA…GICDYLPNPA (287 aa). Residues 108-115, 183-187, and 237-240 contribute to the GTP site; these read AHIDSGKT, DTPGH, and NKMD.

This sequence belongs to the TRAFAC class translation factor GTPase superfamily. Classic translation factor GTPase family. EF-G/EF-2 subfamily.

It localises to the mitochondrion. Its pathway is protein biosynthesis; polypeptide chain elongation. Functionally, mitochondrial GTPase that catalyzes the GTP-dependent ribosomal translocation step during translation elongation. During this step, the ribosome changes from the pre-translocational (PRE) to the post-translocational (POST) state as the newly formed A-site-bound peptidyl-tRNA and P-site-bound deacylated tRNA move to the P and E sites, respectively. Catalyzes the coordinated movement of the two tRNA molecules, the mRNA and conformational changes in the ribosome. In Coccidioides immitis (strain RS) (Valley fever fungus), this protein is Elongation factor G, mitochondrial.